A 447-amino-acid chain; its full sequence is UDP-glycosyltransferase 76E5 (447 aa).

Residues S272, 324–326, 341–349, and 363–366 contribute to the UDP-alpha-D-glucose site; these read APQ, HCGWNSTLE, and NGEQ.

Belongs to the UDP-glycosyltransferase family.

The sequence is that of UDP-glycosyltransferase 76E5 (UGT76E5) from Arabidopsis thaliana (Mouse-ear cress).